A 68-amino-acid chain; its full sequence is Molybdenum-pterin-binding protein 1 (68 aa).

A Mop domain is found at 2–68 (SISARNQLKG…IKSTDVMILA (67 aa)).

Its function is as follows. Binds one mole of molybdenum per mole of protein and contains a pterin. This is Molybdenum-pterin-binding protein 1 (mopI) from Clostridium pasteurianum.